Here is a 108-residue protein sequence, read N- to C-terminus: UPF0060 membrane protein YnfA (108 aa).

At 1–5 the chain is on the periplasmic side; sequence MLKTT. The chain crosses the membrane as a helical span at residues 6–26; the sequence is LLFFVTALCEIIGCFLPWLWI. The Cytoplasmic segment spans residues 27-30; sequence KRGA. The helical transmembrane segment at 31-51 threads the bilayer; sequence SVWWLLPAAASLALFVWLLTL. At 52–60 the chain is on the periplasmic side; sequence HPAASGRVY. The chain crosses the membrane as a helical span at residues 61–81; it reads AAYGGVYVCTALLWLRVVDGV. Topologically, residues 82–84 are cytoplasmic; the sequence is RLT. The chain crosses the membrane as a helical span at residues 85–105; it reads VYDWSGALIALCGMLIIVVGW. Topologically, residues 106–108 are periplasmic; that stretch reads GRT.

Belongs to the UPF0060 family.

Its subcellular location is the cell inner membrane. The sequence is that of UPF0060 membrane protein YnfA from Salmonella typhi.